The chain runs to 1159 residues: Ferroxidase HEPHL1 (1159 aa).

The first 23 residues, 1-23, serve as a signal peptide directing secretion; that stretch reads MFLKQPGGCILLQFLGLLGLVGA. Plastocyanin-like domains follow at residues 24-206, 217-365, 378-560, 570-718, 730-906, and 914-1092; these read VTRT…LLVC, MRTD…VGNC, QRRY…LLVC, TQKG…ISSC, MLRT…LITC, and KGRR…VPSQ. The Extracellular segment spans residues 24–1114; that stretch reads VTRTYYIGIV…KNLRPRGAKA (1091 aa). Cu cation-binding residues include H126 and H128. An N-linked (GlcNAc...) asparagine glycan is attached at N160. C180 and C206 form a disulfide bridge. Cu cation-binding residues include H186 and H188. N235 carries an N-linked (GlcNAc...) asparagine glycan. Cysteines 284 and 365 form a disulfide. Cu cation-binding residues include H303, C346, and H351. A glycan (N-linked (GlcNAc...) asparagine) is linked at N406. The cysteines at positions 534 and 560 are disulfide-linked. N-linked (GlcNAc...) asparagine glycosylation is present at N588. A disulfide bridge connects residues C637 and C718. 4 residues coordinate Cu cation: H656, C699, H704, and M709. The N-linked (GlcNAc...) asparagine glycan is linked to N771. C880 and C906 form a disulfide bridge. N934 is a glycosylation site (N-linked (GlcNAc...) asparagine). Cu cation is bound by residues H1002, H1005, H1007, H1047, C1048, H1049, H1053, and M1058. A helical membrane pass occupies residues 1115–1135; sequence ALVILFILGLLLLVATVVLAL. Residues 1136 to 1159 lie on the Cytoplasmic side of the membrane; that stretch reads RLRSSRRQMAYREVQSCALPTDAL.

This sequence belongs to the multicopper oxidase family. The cofactor is Cu cation.

The protein resides in the membrane. It carries out the reaction 4 Fe(2+) + O2 + 4 H(+) = 4 Fe(3+) + 2 H2O. Its function is as follows. Is a copper-binding glycoprotein with ferroxidase activity. It oxidizes Fe(2+) to Fe(3+) without releasing radical oxygen species. May be involved in the regulation of intracellular iron content. The sequence is that of Ferroxidase HEPHL1 (Hephl1) from Mus musculus (Mouse).